The primary structure comprises 502 residues: Bone morphogenetic protein receptor type-1B (502 aa).

Residues 1-13 (MLLRSSGKLNVGT) form the signal peptide. Positions 1–24 (MLLRSSGKLNVGTKKEDGESTAPT) are disordered. Topologically, residues 14–126 (KKEDGESTAP…DFVDGPIHHK (113 aa)) are extracellular. Cystine bridges form between Cys32–Cys53, Cys34–Cys38, Cys47–Cys71, Cys81–Cys95, and Cys96–Cys102. A helical membrane pass occupies residues 127-148 (ALLISVTVCSLLLVLIILFCYF). Topologically, residues 149–502 (RYKRQEARPR…KMSESQDIKL (354 aa)) are cytoplasmic. The 30-residue stretch at 174–203 (ESLRDLIEQSQSSGSGSGLPLLVQRTIAKQ) folds into the GS domain. Positions 204-494 (IQMVKQIGKG…LRVKKTLAKM (291 aa)) constitute a Protein kinase domain. Residues 210–218 (IGKGRYGEV) and Lys231 contribute to the ATP site. Asp332 acts as the Proton acceptor in catalysis.

It belongs to the protein kinase superfamily. TKL Ser/Thr protein kinase family. TGFB receptor subfamily. Interacts with high affinity with GDF5; positively regulates chondrocyte differentiation. Interacts with SCUBE3. Interacts with TSC22D1/TSC-22. Interacts with TGFBR3. Requires Mg(2+) as cofactor. Mn(2+) serves as cofactor. Post-translationally, autophosphorylated.

It is found in the cell membrane. It carries out the reaction L-threonyl-[receptor-protein] + ATP = O-phospho-L-threonyl-[receptor-protein] + ADP + H(+). It catalyses the reaction L-seryl-[receptor-protein] + ATP = O-phospho-L-seryl-[receptor-protein] + ADP + H(+). Its function is as follows. On ligand binding, forms a receptor complex consisting of two type II and two type I transmembrane serine/threonine kinases. Type II receptors phosphorylate and activate type I receptors which autophosphorylate, then bind and activate SMAD transcriptional regulators. Receptor for BMP7/OP-1. Receptor for GDF5. Positively regulates chondrocyte differentiation through GDF5 interaction. This Mus musculus (Mouse) protein is Bone morphogenetic protein receptor type-1B (Bmpr1b).